The primary structure comprises 273 residues: Undecaprenyl-diphosphatase (273 aa).

The next 9 helical transmembrane spans lie at M1–V21, P39–F59, L63–P83, L92–L112, L118–L138, G165–L185, F195–L215, A225–I245, and R252–M272.

Belongs to the UppP family.

It is found in the cell inner membrane. The catalysed reaction is di-trans,octa-cis-undecaprenyl diphosphate + H2O = di-trans,octa-cis-undecaprenyl phosphate + phosphate + H(+). Functionally, catalyzes the dephosphorylation of undecaprenyl diphosphate (UPP). Confers resistance to bacitracin. The protein is Undecaprenyl-diphosphatase of Desulfosudis oleivorans (strain DSM 6200 / JCM 39069 / Hxd3) (Desulfococcus oleovorans).